We begin with the raw amino-acid sequence, 739 residues long: Oxysterol-binding protein-related protein 9 (739 aa).

Residues 2–99 (ASIMEGPLSK…WIHALEETIL (98 aa)) form the PH domain. Disordered stretches follow at residues 220 to 292 (TQAS…SYSS) and 306 to 371 (SSTS…ESVE). The segment covering 249-259 (NLGSRQSPTPI) has biased composition (polar residues). The span at 260 to 276 (STGSGQSAPSSSLTSPS) shows a compositional bias: low complexity. Composition is skewed to polar residues over residues 277–292 (HVNL…SYSS), 306–330 (SSTS…STGA), and 338–352 (TESL…TNEA).

It belongs to the OSBP family.

The catalysed reaction is a 1,2-diacyl-sn-glycero-3-phospho-(1D-myo-inositol 4-phosphate)(out) + a 1,2-diacyl-sn-glycero-3-phospho-L-serine(in) = a 1,2-diacyl-sn-glycero-3-phospho-(1D-myo-inositol 4-phosphate)(in) + a 1,2-diacyl-sn-glycero-3-phospho-L-serine(out). Interacts with OSBPL11 to function as lipid transfer proteins. Together they form a heterodimer that localizes at the ER-trans-Golgi membrane contact sites, and exchanges phosphatidylserine (1,2-diacyl-sn-glycero-3-phospho-L-serine, PS) for phosphatidylinositol-4-phosphate (1,2-diacyl-sn-glycero-3-phospho-(1D-myo-inositol 4-phosphate), PI(4)P) between the two organelles, a step that is critical for sphingomyelin synthesis in the Golgi complex. The chain is Oxysterol-binding protein-related protein 9 (osbpl9) from Xenopus tropicalis (Western clawed frog).